A 101-amino-acid polypeptide reads, in one-letter code: ATP-dependent Clp protease adapter protein ClpS (101 aa).

The protein belongs to the ClpS family. As to quaternary structure, binds to the N-terminal domain of the chaperone ClpA.

Its function is as follows. Involved in the modulation of the specificity of the ClpAP-mediated ATP-dependent protein degradation. In Corynebacterium jeikeium (strain K411), this protein is ATP-dependent Clp protease adapter protein ClpS.